Reading from the N-terminus, the 341-residue chain is UDP-3-O-acylglucosamine N-acyltransferase (341 aa).

Histidine 236 serves as the catalytic Proton acceptor.

This sequence belongs to the transferase hexapeptide repeat family. LpxD subfamily. In terms of assembly, homotrimer.

It catalyses the reaction a UDP-3-O-[(3R)-3-hydroxyacyl]-alpha-D-glucosamine + a (3R)-hydroxyacyl-[ACP] = a UDP-2-N,3-O-bis[(3R)-3-hydroxyacyl]-alpha-D-glucosamine + holo-[ACP] + H(+). Its pathway is bacterial outer membrane biogenesis; LPS lipid A biosynthesis. Functionally, catalyzes the N-acylation of UDP-3-O-acylglucosamine using 3-hydroxyacyl-ACP as the acyl donor. Is involved in the biosynthesis of lipid A, a phosphorylated glycolipid that anchors the lipopolysaccharide to the outer membrane of the cell. The protein is UDP-3-O-acylglucosamine N-acyltransferase of Lawsonia intracellularis (strain PHE/MN1-00).